Reading from the N-terminus, the 480-residue chain is UDP-glycosyltransferase 72B2 (480 aa).

Residues serine 277, 347-349, 364-372, and 386-389 each bind UDP-alpha-D-glucose; these read APQ, HCGWNSTLE, and FAEQ.

The protein belongs to the UDP-glycosyltransferase family.

The sequence is that of UDP-glycosyltransferase 72B2 (UGT72B2) from Arabidopsis thaliana (Mouse-ear cress).